Reading from the N-terminus, the 76-residue chain is uncharacterized protein (76 aa).

This is an uncharacterized protein from Magallana gigas (Pacific oyster).